Reading from the N-terminus, the 235-residue chain is Sugar fermentation stimulation protein homolog (235 aa).

This sequence belongs to the SfsA family.

The protein is Sugar fermentation stimulation protein homolog of Nitrosococcus oceani (strain ATCC 19707 / BCRC 17464 / JCM 30415 / NCIMB 11848 / C-107).